A 551-amino-acid polypeptide reads, in one-letter code: Interferon-induced, double-stranded RNA-activated protein kinase (551 aa).

At alanine 2 the chain carries N-acetylalanine. The segment at alanine 2 to glycine 180 is (Microbial infection) Interaction with HCV NS5A. The DRBM 1 domain occupies phenylalanine 9–lysine 77. Lysine 69 is covalently cross-linked (Glycyl lysine isopeptide (Lys-Gly) (interchain with G-Cter in ISG15)). The residue at position 83 (serine 83) is a Phosphoserine. Residues threonine 88, threonine 89, and threonine 90 each carry the phosphothreonine; by autocatalysis modification. Positions asparagine 100–serine 167 constitute a DRBM 2 domain. The residue at position 101 (tyrosine 101) is a Phosphotyrosine; by autocatalysis. A Glycyl lysine isopeptide (Lys-Gly) (interchain with G-Cter in ISG15) cross-link involves residue lysine 159. Position 162 is a phosphotyrosine; by autocatalysis (tyrosine 162). Residues serine 202–isoleucine 215 are compositionally biased toward polar residues. The tract at residues serine 202–leucine 222 is disordered. Serine 242 carries the post-translational modification Phosphoserine; by autocatalysis. Phosphothreonine; by autocatalysis is present on residues threonine 255 and threonine 258. The interval aspartate 266–leucine 362 is dimerization. Positions aspartate 266–cysteine 551 are interaction with TRAF5. The Protein kinase domain maps to phenylalanine 267 to valine 538. Isoleucine 273 to valine 281 contributes to the ATP binding site. A Phosphotyrosine; by autocatalysis modification is found at tyrosine 293. Lysine 296 provides a ligand contact to ATP. 2 repeat units span residues aspartate 331–serine 343 and aspartate 345–serine 357. Residues aspartate 331–serine 357 are 2 X 13 AA approximate repeats. Residues glutamate 379–threonine 496 are interaction with EIF2S1/EIF-2ALPHA. The Proton acceptor role is filled by aspartate 414. Aspartate 432 lines the Mg(2+) pocket. Threonine 446 and threonine 451 each carry phosphothreonine; by autocatalysis. Residues serine 456 and serine 542 each carry the phosphoserine modification.

The protein belongs to the protein kinase superfamily. Ser/Thr protein kinase family. GCN2 subfamily. As to quaternary structure, homodimer. Interacts with STRBP. Interacts with DNAJC3. Forms a complex with FANCA, FANCC, FANCG and HSP70. Interacts with ADAR/ADAR1. Interacts with IRS1. The inactive form interacts with NCK1 and GSN. Interacts (via the kinase catalytic domain) with STAT3 (via SH2 domain), TRAF2 (C-terminus), TRAF5 (C-terminus) and TRAF6 (C-terminus). Interacts with MAP2K6, IKBKB/IKKB, NPM1, TARBP2, NLRP1, NLRP3, NLRC4 and AIM2. Interacts (via DRBM 1 domain) with DUS2L (via DRBM domain). Interacts with DHX9 (via N-terminus) and this interaction is dependent upon activation of the kinase. Interacts with EIF2S1/EIF-2ALPHA; this interaction induces a conformational change in EIF2S1 and its phosphorylation by EIF2AK2. (Microbial infection) Interacts with human cytomegalovirus (HCMV) TRS1; this interaction retains EIF2AK2 to the nucleus and prevents its activation. In terms of assembly, (Microbial infection) Interacts with vaccinia virus protein K3 (K3L); this interaction inhibits EIF2AK2. As to quaternary structure, (Microbial infection) Interacts with human herpes simplex virus 1 (HHV-1) protein US11 in an RNA-dependent manner. (Microbial infection) The inactive form interacts with Toscana virus (TOS) NSS. In terms of assembly, (Microbial infection) Interacts with herpes virus 8 protein v-IRF2; this interaction inhibits EIF2AK2 activation. As to quaternary structure, (Microbial infection) Interacts with vaccinia protein E3. (Microbial infection) Interacts (via N-terminus) with Hepatitis C virus (HCV) mature core protein (via N-terminus); this interaction induces the autophosphorylation of EIF2AK2. In terms of assembly, (Microbial infection) Interacts with Hepatitis C virus (HCV) non-structural protein 5A (NS5A); this interaction leads to disruption of EIF2AK2 dimerization by NS5A. As to quaternary structure, (Microbial infection) Interacts with Hepatitis C virus (HCV) envelope glycoprotein E2; this interaction inhibits EIF2AK2 and blocks its inhibitory effect on protein synthesis and cell growth. (Microbial infection) Interacts with human respiratory syncytial virus (HRSV) nucleoprotein; this interaction inhibits EIF2AK2 phosphorylation of EIF2S1 and blocks EIF2AK2-mediated translation shutoff. In terms of assembly, (Microbial infection) Interacts with human herpesvirus 8 protein MTA/ORF57; this interaction inhibits stress granule formation. Mg(2+) is required as a cofactor. Post-translationally, autophosphorylated on several Ser, Thr and Tyr residues. Autophosphorylation of Thr-451 is dependent on Thr-446 and is stimulated by dsRNA binding and dimerization. Autophosphorylation apparently leads to the activation of the kinase. Tyrosine autophosphorylation is essential for efficient dsRNA-binding, dimerization, and kinase activation. Highly expressed in thymus, spleen and bone marrow compared to non-hematopoietic tissues such as small intestine, liver, or kidney tissues. Colocalizes with GSK3B and TAU in the Alzheimer disease (AD) brain. Elevated levels seen in breast and colon carcinomas, and which correlates with tumor progression and invasiveness or risk of progression.

It localises to the cytoplasm. Its subcellular location is the nucleus. The protein localises to the perinuclear region. The catalysed reaction is L-seryl-[protein] + ATP = O-phospho-L-seryl-[protein] + ADP + H(+). The enzyme catalyses L-threonyl-[protein] + ATP = O-phospho-L-threonyl-[protein] + ADP + H(+). It catalyses the reaction L-tyrosyl-[protein] + ATP = O-phospho-L-tyrosyl-[protein] + ADP + H(+). Its activity is regulated as follows. Initially produced in an inactive form and is activated by binding to viral dsRNA, which causes dimerization and autophosphorylation in the activation loop and stimulation of function. ISGylation can activate it in the absence of viral infection. Can also be activated by heparin, pro-inflammatory stimuli, growth factors, cytokines, oxidative stress and the cellular protein PRKRA. Activity is markedly stimulated by manganese ions. Activation is blocked by the viral components HIV-1 Tat protein and large amounts of HIV-1 trans-activation response (TAR) RNA element as well as by the cellular proteins TARBP2, DUS2L, NPM1, NCK1 and ADAR. Down-regulated by Toscana virus (TOS) and Rift valley fever virus (RVFV) NSS which promote its proteasomal degradation. Inhibited by vaccinia virus protein E3, probably via dsRNA sequestering. In terms of biological role, IFN-induced dsRNA-dependent serine/threonine-protein kinase that phosphorylates the alpha subunit of eukaryotic translation initiation factor 2 (EIF2S1/eIF-2-alpha) and plays a key role in the innate immune response to viral infection. Inhibits viral replication via the integrated stress response (ISR): EIF2S1/eIF-2-alpha phosphorylation in response to viral infection converts EIF2S1/eIF-2-alpha in a global protein synthesis inhibitor, resulting to a shutdown of cellular and viral protein synthesis, while concomitantly initiating the preferential translation of ISR-specific mRNAs, such as the transcriptional activator ATF4. Exerts its antiviral activity on a wide range of DNA and RNA viruses including hepatitis C virus (HCV), hepatitis B virus (HBV), measles virus (MV) and herpes simplex virus 1 (HHV-1). Also involved in the regulation of signal transduction, apoptosis, cell proliferation and differentiation: phosphorylates other substrates including p53/TP53, PPP2R5A, DHX9, ILF3, IRS1 and the HHV-1 viral protein US11. In addition to serine/threonine-protein kinase activity, also has tyrosine-protein kinase activity and phosphorylates CDK1 at 'Tyr-4' upon DNA damage, facilitating its ubiquitination and proteasomal degradation. Either as an adapter protein and/or via its kinase activity, can regulate various signaling pathways (p38 MAP kinase, NF-kappa-B and insulin signaling pathways) and transcription factors (JUN, STAT1, STAT3, IRF1, ATF3) involved in the expression of genes encoding pro-inflammatory cytokines and IFNs. Activates the NF-kappa-B pathway via interaction with IKBKB and TRAF family of proteins and activates the p38 MAP kinase pathway via interaction with MAP2K6. Can act as both a positive and negative regulator of the insulin signaling pathway (ISP). Negatively regulates ISP by inducing the inhibitory phosphorylation of insulin receptor substrate 1 (IRS1) at 'Ser-312' and positively regulates ISP via phosphorylation of PPP2R5A which activates FOXO1, which in turn up-regulates the expression of insulin receptor substrate 2 (IRS2). Can regulate NLRP3 inflammasome assembly and the activation of NLRP3, NLRP1, AIM2 and NLRC4 inflammasomes. Plays a role in the regulation of the cytoskeleton by binding to gelsolin (GSN), sequestering the protein in an inactive conformation away from actin. The protein is Interferon-induced, double-stranded RNA-activated protein kinase (EIF2AK2) of Homo sapiens (Human).